A 228-amino-acid chain; its full sequence is Urease accessory protein UreF (228 aa).

Belongs to the UreF family. UreD, UreF and UreG form a complex that acts as a GTP-hydrolysis-dependent molecular chaperone, activating the urease apoprotein by helping to assemble the nickel containing metallocenter of UreC. The UreE protein probably delivers the nickel.

The protein localises to the cytoplasm. Required for maturation of urease via the functional incorporation of the urease nickel metallocenter. The protein is Urease accessory protein UreF of Prochlorococcus marinus (strain MIT 9312).